Reading from the N-terminus, the 562-residue chain is Flagella accessory protein J (562 aa).

9 consecutive transmembrane segments (helical) span residues 32–52, 53–73, 199–219, 225–245, 273–293, 302–322, 446–466, 498–518, and 527–547; these read IVLI…IYLL, LPII…DSQK, VSAM…PFLL, FMAT…VVVI, IISV…KYIV, PYMI…FVAL, FVGV…ASLG, VVEY…AILI, and FVSL…AYIT.

This sequence to M.voltae FlaJ. To M.jannaschii MJ1286.

Its subcellular location is the cell membrane. It localises to the archaeal flagellum. This is Flagella accessory protein J (flaJ) from Methanocaldococcus jannaschii (strain ATCC 43067 / DSM 2661 / JAL-1 / JCM 10045 / NBRC 100440) (Methanococcus jannaschii).